The primary structure comprises 1644 residues: Peroxisome proliferator-activated receptor gamma coactivator-related protein 1 (1644 aa).

7 disordered regions span residues 1–61 (MAAR…DSSF), 170–249 (PERD…EVAG), 429–616 (LTPK…TSPV), 646–761 (AADP…PETP), 773–884 (SAPA…QPPG), 978–1074 (STVS…EGVV), and 1322–1507 (AAPP…NDHY). Residues 12-22 (APPPTGGPGPD) show a composition bias toward pro residues. Positions 213–222 (SSPKLPSWRP) are enriched in low complexity. Position 232 is a phosphoserine (Ser232). Residues 425 to 460 (IMESLTPKEPQSLPASASQGSQKVPRKGRKKKNKEQ) are necessary for interaction with CREB1 and NRF1 and for transcriptional coactivation. The span at 437 to 446 (LPASASQGSQ) shows a compositional bias: polar residues. Residues 448-457 (VPRKGRKKKN) are compositionally biased toward basic residues. Residues 475-496 (SSRGQSTVSAEVNSQAGSSQKQ) are compositionally biased toward polar residues. The segment covering 515–524 (RAWARAWAAA) has biased composition (low complexity). Ser541 carries the phosphoserine modification. Residues 556-572 (ETSQANPTLSLNDSAQA) are compositionally biased toward polar residues. A compositionally biased stretch (basic and acidic residues) spans 691–702 (DHPKVVSPEGKD). Residues 811 to 821 (MVSTHSEQVSS) are compositionally biased toward polar residues. Pro residues-rich tracts occupy residues 828–864 (VRPP…PLLP) and 874–884 (RLPPPPLQPPG). Phosphoserine is present on residues Ser1059, Ser1393, and Ser1395. The segment at 1361–1432 (EASPCRSEMN…SSSSSVSSSS (72 aa)) is necessary for interaction with CREB1 and NRF1. 2 stretches are compositionally biased toward low complexity: residues 1409–1433 (SRSV…SSSR) and 1453–1489 (SSCS…VSPC). One can recognise an RRM domain in the interval 1523–1599 (RVVFIGKIPG…QPFDLCFGGR (77 aa)).

In terms of assembly, interacts with CREB1 and NRF1. As to expression, expressed in liver, heart, skeletal muscle, kidney and white and brown adipose tissues.

It localises to the nucleus. Functionally, acts as a coactivator during transcriptional activation of nuclear genes related to mitochondrial biogenesis and cell growth. Involved in the transcription coactivation of CREB and NRF1 target genes. This chain is Peroxisome proliferator-activated receptor gamma coactivator-related protein 1 (Pprc1), found in Mus musculus (Mouse).